Here is a 304-residue protein sequence, read N- to C-terminus: Glycine--tRNA ligase alpha subunit (304 aa).

This sequence belongs to the class-II aminoacyl-tRNA synthetase family. Tetramer of two alpha and two beta subunits.

Its subcellular location is the cytoplasm. The enzyme catalyses tRNA(Gly) + glycine + ATP = glycyl-tRNA(Gly) + AMP + diphosphate. This is Glycine--tRNA ligase alpha subunit from Streptococcus agalactiae serotype Ia (strain ATCC 27591 / A909 / CDC SS700).